The chain runs to 228 residues: Mediator of RNA polymerase II transcription subunit 7-A (228 aa).

It belongs to the Mediator complex subunit 7 family. Component of the Mediator complex.

The protein localises to the nucleus. In terms of biological role, component of the Mediator complex, a coactivator involved in the regulated transcription of nearly all RNA polymerase II-dependent genes. Mediator functions as a bridge to convey information from gene-specific regulatory proteins to the basal RNA polymerase II transcription machinery. Mediator is recruited to promoters by direct interactions with regulatory proteins and serves as a scaffold for the assembly of a functional preinitiation complex with RNA polymerase II and the general transcription factors. This is Mediator of RNA polymerase II transcription subunit 7-A (med7-a) from Xenopus laevis (African clawed frog).